Reading from the N-terminus, the 414-residue chain is 3-ketoacyl-CoA thiolase, peroxisomal (414 aa).

The N-terminal 9 residues, 1–9 (MDRLNNLAT), are a transit peptide targeting the peroxisome. A PTS2-type peroxisomal targeting signal region spans residues 1 to 9 (MDRLNNLAT). Cys115 acts as the Acyl-thioester intermediate in catalysis. Residues His370 and Cys400 each act as proton acceptor in the active site.

The protein belongs to the thiolase-like superfamily. Thiolase family. As to quaternary structure, homodimer. Interacts (via PTS2-type peroxisomal targeting signal region) with PEX7; leading to its translocation into peroxisomes.

It localises to the peroxisome. The catalysed reaction is an acyl-CoA + acetyl-CoA = a 3-oxoacyl-CoA + CoA. The protein operates within lipid metabolism; fatty acid metabolism. In terms of biological role, responsible for the thiolytic cleavage of straight chain 3-keto fatty acyl-CoAs (3-oxoacyl-CoAs). The chain is 3-ketoacyl-CoA thiolase, peroxisomal (POT1) from Yarrowia lipolytica (strain CLIB 122 / E 150) (Yeast).